An 886-amino-acid polypeptide reads, in one-letter code: Conserved oligomeric Golgi complex subunit 1 (886 aa).

A compositionally biased stretch (basic and acidic residues) spans 834–846 (SAERKSPIQEPVE). Residues 834-886 (SAERKSPIQEPVEKTATTTPTRKSGGNGARKGDSSKSKSSAASFFGMSQEWFR) are disordered. At serine 839 the chain carries Phosphoserine. Positions 848 to 857 (TATTTPTRKS) are enriched in polar residues.

The protein belongs to the COG1 family. In terms of assembly, component of the conserved oligomeric Golgi complex which is composed of eight different subunits and is required for normal Golgi morphology and localization.

It is found in the golgi apparatus membrane. Required for normal Golgi function. This chain is Conserved oligomeric Golgi complex subunit 1, found in Drosophila melanogaster (Fruit fly).